We begin with the raw amino-acid sequence, 101 residues long: Urease subunit beta (101 aa).

It belongs to the urease beta subunit family. Heterotrimer of UreA (gamma), UreB (beta) and UreC (alpha) subunits. Three heterotrimers associate to form the active enzyme.

The protein resides in the cytoplasm. The catalysed reaction is urea + 2 H2O + H(+) = hydrogencarbonate + 2 NH4(+). It participates in nitrogen metabolism; urea degradation; CO(2) and NH(3) from urea (urease route): step 1/1. The chain is Urease subunit beta from Chelativorans sp. (strain BNC1).